Here is a 158-residue protein sequence, read N- to C-terminus: Transcription elongation factor GreA (158 aa).

It belongs to the GreA/GreB family.

Functionally, necessary for efficient RNA polymerase transcription elongation past template-encoded arresting sites. The arresting sites in DNA have the property of trapping a certain fraction of elongating RNA polymerases that pass through, resulting in locked ternary complexes. Cleavage of the nascent transcript by cleavage factors such as GreA or GreB allows the resumption of elongation from the new 3'terminus. GreA releases sequences of 2 to 3 nucleotides. The protein is Transcription elongation factor GreA of Sinorhizobium medicae (strain WSM419) (Ensifer medicae).